Consider the following 71-residue polypeptide: uncharacterized protein (71 aa).

Residues 1 to 26 (MIKFSVILGMIRCSLTHITTKNTVNA) form the signal peptide.

This is an uncharacterized protein from Bacillus subtilis (strain 168).